A 194-amino-acid chain; its full sequence is Large ribosomal subunit protein eL15 (194 aa).

The disordered stretch occupies residues 168–194; it reads RSRGLLNKGKGAEKVRPSIRAHQGKGK. A compositionally biased stretch (basic residues) spans 184–194; sequence PSIRAHQGKGK.

This sequence belongs to the eukaryotic ribosomal protein eL15 family. Part of the 50S ribosomal subunit.

This is Large ribosomal subunit protein eL15 from Thermococcus kodakarensis (strain ATCC BAA-918 / JCM 12380 / KOD1) (Pyrococcus kodakaraensis (strain KOD1)).